Here is a 292-residue protein sequence, read N- to C-terminus: Small ribosomal subunit biogenesis GTPase RsgA (292 aa).

The region spanning 64–221 (RSELFRPAVA…LVDTPGFSSL (158 aa)) is the CP-type G domain. GTP contacts are provided by residues 113–116 (NKMD) and 164–172 (GPSGVGKST). Zn(2+)-binding residues include C245, C250, H252, and C258.

Belongs to the TRAFAC class YlqF/YawG GTPase family. RsgA subfamily. Monomer. Associates with 30S ribosomal subunit, binds 16S rRNA. Requires Zn(2+) as cofactor.

The protein localises to the cytoplasm. One of several proteins that assist in the late maturation steps of the functional core of the 30S ribosomal subunit. Helps release RbfA from mature subunits. May play a role in the assembly of ribosomal proteins into the subunit. Circularly permuted GTPase that catalyzes slow GTP hydrolysis, GTPase activity is stimulated by the 30S ribosomal subunit. The chain is Small ribosomal subunit biogenesis GTPase RsgA from Clostridium botulinum (strain Loch Maree / Type A3).